The following is a 243-amino-acid chain: Probable transcriptional regulatory protein BH0025 (243 aa).

This sequence belongs to the TACO1 family.

It localises to the cytoplasm. The sequence is that of Probable transcriptional regulatory protein BH0025 from Borrelia hermsii (strain HS1 / DAH).